The chain runs to 113 residues: ATP synthase epsilon chain (113 aa).

It belongs to the ATPase epsilon chain family. As to quaternary structure, F-type ATPases have 2 components, CF(1) - the catalytic core - and CF(0) - the membrane proton channel. CF(1) has five subunits: alpha(3), beta(3), gamma(1), delta(1), epsilon(1). CF(0) has three main subunits: a, b and c.

The protein localises to the cell membrane. Produces ATP from ADP in the presence of a proton gradient across the membrane. This is ATP synthase epsilon chain from Wolbachia pipientis subsp. Culex pipiens (strain wPip).